Reading from the N-terminus, the 222-residue chain is Triosephosphate isomerase (222 aa).

9–11 (NYK) is a substrate binding site. Residue histidine 93 is the Electrophile of the active site. The active-site Proton acceptor is the glutamate 141. Substrate is bound by residues isoleucine 146, glycine 181, and 202 to 203 (AS).

This sequence belongs to the triosephosphate isomerase family. In terms of assembly, homotetramer; dimer of dimers.

It localises to the cytoplasm. It catalyses the reaction D-glyceraldehyde 3-phosphate = dihydroxyacetone phosphate. It participates in carbohydrate biosynthesis; gluconeogenesis. The protein operates within carbohydrate degradation; glycolysis; D-glyceraldehyde 3-phosphate from glycerone phosphate: step 1/1. Involved in the gluconeogenesis. Catalyzes stereospecifically the conversion of dihydroxyacetone phosphate (DHAP) to D-glyceraldehyde-3-phosphate (G3P). This Methanobrevibacter smithii (strain ATCC 35061 / DSM 861 / OCM 144 / PS) protein is Triosephosphate isomerase.